We begin with the raw amino-acid sequence, 102 residues long: Complement inhibitor RaCI6 (102 aa).

An N-terminal signal peptide occupies residues 1-24 (MAALNGLVLLLLTISAMFISECYS). Cystine bridges form between Cys37–Cys61 and Cys42–Cys63.

This sequence belongs to the RaCI family. As to expression, expressed in salivary glands.

It localises to the secreted. In terms of biological role, complement inhibitor. Prevents complement-mediated C5 activation by binding to C5. Binds C5 at a different binding site than the other tick complement inhibitors OmCI and CirpT1, and the drug eculizumab. The chain is Complement inhibitor RaCI6 from Dermacentor andersoni (Rocky mountain wood tick).